The primary structure comprises 393 residues: CCA-adding enzyme (393 aa).

ATP-binding residues include Gly27 and Arg30. CTP is bound by residues Gly27 and Arg30. Positions 40 and 42 each coordinate Mg(2+). Arg111, Asp154, Arg157, Arg160, and Arg163 together coordinate ATP. CTP contacts are provided by Arg111, Asp154, Arg157, Arg160, and Arg163.

Belongs to the tRNA nucleotidyltransferase/poly(A) polymerase family. Bacterial CCA-adding enzyme type 3 subfamily. Homodimer. Mg(2+) is required as a cofactor.

The enzyme catalyses a tRNA precursor + 2 CTP + ATP = a tRNA with a 3' CCA end + 3 diphosphate. The catalysed reaction is a tRNA with a 3' CCA end + 2 CTP + ATP = a tRNA with a 3' CCACCA end + 3 diphosphate. Functionally, catalyzes the addition and repair of the essential 3'-terminal CCA sequence in tRNAs without using a nucleic acid template. Adds these three nucleotides in the order of C, C, and A to the tRNA nucleotide-73, using CTP and ATP as substrates and producing inorganic pyrophosphate. tRNA 3'-terminal CCA addition is required both for tRNA processing and repair. Also involved in tRNA surveillance by mediating tandem CCA addition to generate a CCACCA at the 3' terminus of unstable tRNAs. While stable tRNAs receive only 3'-terminal CCA, unstable tRNAs are marked with CCACCA and rapidly degraded. This chain is CCA-adding enzyme, found in Listeria monocytogenes serovar 1/2a (strain ATCC BAA-679 / EGD-e).